Here is a 753-residue protein sequence, read N- to C-terminus: ATPase family gene 2 protein homolog B (753 aa).

Methionine 1 carries the N-acetylmethionine modification. Residues 1 to 189 (MAPDSDPFPE…PRTRVSLGGE (189 aa)) form a required for interaction with AFG2A and CINP region. The segment at 171–203 (SPDPAGLVTPRTRVSLGGEPPSEAQPQPEVPLG) is disordered. Residues 241–248 (GPPGVGKT) and 505–512 (GPPGCAKT) contribute to the ATP site.

It belongs to the AAA ATPase family. AFG2 subfamily. Part of the 55LCC heterohexameric ATPase complex composed at least of AIRIM, AFG2A, AFG2B and CINP. Associates with pre-60S ribosomal particles. Expressed in both neurons and glia during embryonic and adult stages of brain development.

Its subcellular location is the cytoplasm. It localises to the cytoskeleton. The protein resides in the spindle. The protein localises to the nucleus. It carries out the reaction ATP + H2O = ADP + phosphate + H(+). In the context of 55LCC heterohexameric ATPase complex, the ATPase activity is stimulated by DNA binding and inhibited in presence of RNA. Functionally, ATP-dependent chaperone part of the 55LCC heterohexameric ATPase complex which is chromatin-associated and promotes replisome proteostasis to maintain replication fork progression and genome stability. Required for replication fork progression, sister chromatid cohesion, and chromosome stability. The ATPase activity is specifically enhanced by replication fork DNA and is coupled to cysteine protease-dependent cleavage of replisome substrates in response to replication fork damage. Uses ATPase activity to process replisome substrates in S-phase, facilitating their proteolytic turnover from chromatin to ensure DNA replication and mitotic fidelity. Plays an essential role in the cytoplasmic maturation steps of pre-60S ribosomal particles by promoting the release of shuttling protein RSL24D1/RLP24 from the pre-ribosomal particles. This Homo sapiens (Human) protein is ATPase family gene 2 protein homolog B.